The primary structure comprises 873 residues: Protein translocase subunit SecA (873 aa).

ATP-binding positions include Q88, 106 to 110 (GEGKT), and D501. Zn(2+) is bound by residues C856, C858, C867, and H868.

It belongs to the SecA family. As to quaternary structure, monomer and homodimer. Part of the essential Sec protein translocation apparatus which comprises SecA, SecYEG and auxiliary proteins SecDF-YajC and YidC. Requires Zn(2+) as cofactor.

Its subcellular location is the cell inner membrane. It is found in the cytoplasm. It catalyses the reaction ATP + H2O + cellular proteinSide 1 = ADP + phosphate + cellular proteinSide 2.. In terms of biological role, part of the Sec protein translocase complex. Interacts with the SecYEG preprotein conducting channel. Has a central role in coupling the hydrolysis of ATP to the transfer of proteins into and across the cell membrane, serving both as a receptor for the preprotein-SecB complex and as an ATP-driven molecular motor driving the stepwise translocation of polypeptide chains across the membrane. The chain is Protein translocase subunit SecA from Anaplasma phagocytophilum (strain HZ).